The primary structure comprises 241 residues: tRNA pseudouridine synthase A (241 aa).

Residue Asp-51 is the Nucleophile of the active site. Residue Tyr-110 coordinates substrate.

It belongs to the tRNA pseudouridine synthase TruA family. As to quaternary structure, homodimer.

The enzyme catalyses uridine(38/39/40) in tRNA = pseudouridine(38/39/40) in tRNA. Formation of pseudouridine at positions 38, 39 and 40 in the anticodon stem and loop of transfer RNAs. The chain is tRNA pseudouridine synthase A from Campylobacter jejuni subsp. doylei (strain ATCC BAA-1458 / RM4099 / 269.97).